A 414-amino-acid polypeptide reads, in one-letter code: Zinc metalloproteinase nas-26 (414 aa).

The N-terminal stretch at 1–20 is a signal peptide; the sequence is MTSSLVLILAPLALVAIGEA. Residues 21–61 constitute a propeptide that is removed on maturation; that stretch reads AFGNSSKIFEIPGLEVMASDKYPHFTTIETVSRTKVHRHRR. A glycan (N-linked (GlcNAc...) asparagine) is linked at Asn-24. One can recognise a Peptidase M12A domain in the interval 62–264; the sequence is EVIAGQIYDW…AKVINDIYCP (203 aa). Cystine bridges form between Cys-103-Cys-263, Cys-126-Cys-146, Cys-267-Cys-286, Cys-289-Cys-300, Cys-308-Cys-331, and Cys-358-Cys-378. His-154 contributes to the Zn(2+) binding site. Residue Glu-155 is part of the active site. The Zn(2+) site is built by His-158 and His-164. One can recognise an EGF-like domain in the interval 251–307; sequence AFLDAKVINDIYCPNACQGRNHLNCLAGGYPDPNNCNVCRCPEGLGGPDCGRLQPSP. Positions 308–414 constitute a CUB domain; the sequence is CGGEIHASDQ…RFSLRFRRQA (107 aa).

Zn(2+) serves as cofactor.

It localises to the secreted. Its function is as follows. Metalloprotease. The sequence is that of Zinc metalloproteinase nas-26 (toh-1) from Caenorhabditis elegans.